The sequence spans 113 residues: T cell receptor alpha variable 8-6 (113 aa).

Residues 1 to 20 (MLLLLVPAFQVIFTLGGTRA) form the signal peptide. The Ig-like domain occupies 21–113 (QSVTQLDSQV…DTAEYFCAVS (93 aa)). A disulfide bridge links cysteine 42 with cysteine 110. N-linked (GlcNAc...) asparagine glycosylation is found at asparagine 43 and asparagine 87.

As to quaternary structure, alpha-beta TR is a heterodimer composed of an alpha and beta chain; disulfide-linked. The alpha-beta TR is associated with the transmembrane signaling CD3 coreceptor proteins to form the TR-CD3 (TcR or TCR). The assembly of alpha-beta TR heterodimers with CD3 occurs in the endoplasmic reticulum where a single alpha-beta TR heterodimer associates with one CD3D-CD3E heterodimer, one CD3G-CD3E heterodimer and one CD247 homodimer forming a stable octameric structure. CD3D-CD3E and CD3G-CD3E heterodimers preferentially associate with TR alpha and TR beta chains, respectively. The association of the CD247 homodimer is the last step of TcR assembly in the endoplasmic reticulum and is required for transport to the cell surface.

It localises to the cell membrane. Its function is as follows. V region of the variable domain of T cell receptor (TR) alpha chain that participates in the antigen recognition. Alpha-beta T cell receptors are antigen specific receptors which are essential to the immune response and are present on the cell surface of T lymphocytes. Recognize peptide-major histocompatibility (MH) (pMH) complexes that are displayed by antigen presenting cells (APC), a prerequisite for efficient T cell adaptive immunity against pathogens. Binding of alpha-beta TR to pMH complex initiates TR-CD3 clustering on the cell surface and intracellular activation of LCK that phosphorylates the ITAM motifs of CD3G, CD3D, CD3E and CD247 enabling the recruitment of ZAP70. In turn ZAP70 phosphorylates LAT, which recruits numerous signaling molecules to form the LAT signalosome. The LAT signalosome propagates signal branching to three major signaling pathways, the calcium, the mitogen-activated protein kinase (MAPK) kinase and the nuclear factor NF-kappa-B (NF-kB) pathways, leading to the mobilization of transcription factors that are critical for gene expression and essential for T cell growth and differentiation. The T cell repertoire is generated in the thymus, by V-(D)-J rearrangement. This repertoire is then shaped by intrathymic selection events to generate a peripheral T cell pool of self-MH restricted, non-autoaggressive T cells. Post-thymic interaction of alpha-beta TR with the pMH complexes shapes TR structural and functional avidity. The protein is T cell receptor alpha variable 8-6 of Homo sapiens (Human).